We begin with the raw amino-acid sequence, 764 residues long: 5-methyltetrahydropteroyltriglutamate--homocysteine methyltransferase (764 aa).

5-methyltetrahydropteroyltri-L-glutamate contacts are provided by residues 16-19 and lysine 121; that span reads RELK. L-homocysteine contacts are provided by residues 440-442 and glutamate 493; that span reads IGS. L-methionine-binding positions include 440–442 and glutamate 493; that span reads IGS. 5-methyltetrahydropteroyltri-L-glutamate contacts are provided by residues 524 to 525 and tryptophan 570; that span reads RC. Aspartate 608 is a binding site for L-homocysteine. L-methionine is bound at residue aspartate 608. Glutamate 614 serves as a coordination point for 5-methyltetrahydropteroyltri-L-glutamate. Positions 650, 652, and 674 each coordinate Zn(2+). The active-site Proton donor is histidine 703. Cysteine 735 is a Zn(2+) binding site.

This sequence belongs to the vitamin-B12 independent methionine synthase family. The cofactor is Zn(2+).

The enzyme catalyses 5-methyltetrahydropteroyltri-L-glutamate + L-homocysteine = tetrahydropteroyltri-L-glutamate + L-methionine. It participates in amino-acid biosynthesis; L-methionine biosynthesis via de novo pathway; L-methionine from L-homocysteine (MetE route): step 1/1. Catalyzes the transfer of a methyl group from 5-methyltetrahydrofolate to homocysteine resulting in methionine formation. The protein is 5-methyltetrahydropteroyltriglutamate--homocysteine methyltransferase of Burkholderia cenocepacia (strain HI2424).